We begin with the raw amino-acid sequence, 338 residues long: Fructose-1,6-bisphosphatase 1 (338 aa).

N-acetylthreonine is present on Thr2. Residues 18 to 22 and 28 to 32 contribute to the AMP site; these read VMEEG and TGEMT. Mg(2+)-binding residues include Asp69 and Glu98. 113–114 lines the AMP pocket; it reads KY. 3 residues coordinate Mg(2+): Asp119, Leu121, and Asp122. 122–125 lines the substrate pocket; it reads DGSS. Lys141 contributes to the AMP binding site. Lys151 is subject to N6-succinyllysine. Ser208 is subject to Phosphoserine. Residues 213–216, 244–249, Tyr265, and 275–277 each bind substrate; these read NEGY, RYVGSM, and KLR. Phosphotyrosine occurs at positions 216, 245, and 265. Glu281 provides a ligand contact to Mg(2+).

It belongs to the FBPase class 1 family. As to quaternary structure, homotetramer. Mg(2+) is required as a cofactor.

The enzyme catalyses beta-D-fructose 1,6-bisphosphate + H2O = beta-D-fructose 6-phosphate + phosphate. It participates in carbohydrate biosynthesis; gluconeogenesis. Subject to complex allosteric regulation. The enzyme can assume an active R-state, or an inactive T-state. Intermediate conformations may exist. AMP acts as an allosteric inhibitor. AMP binding affects the turnover of bound substrate and not the affinity for substrate. Fructose 2,6-bisphosphate acts as a competitive inhibitor. Fructose 2,6-bisphosphate and AMP have synergistic effects. In terms of biological role, catalyzes the hydrolysis of fructose 1,6-bisphosphate to fructose 6-phosphate in the presence of divalent cations, acting as a rate-limiting enzyme in gluconeogenesis. Plays a role in regulating glucose sensing and insulin secretion of pancreatic beta-cells. Appears to modulate glycerol gluconeogenesis in liver. Important regulator of appetite and adiposity; increased expression of the protein in liver after nutrient excess increases circulating satiety hormones and reduces appetite-stimulating neuropeptides and thus seems to provide a feedback mechanism to limit weight gain. This is Fructose-1,6-bisphosphatase 1 (FBP1) from Bos taurus (Bovine).